A 366-amino-acid chain; its full sequence is MTPEHLPTEQYEAQLAEKVARLQSMMAPFSGLVPEVFRSPVSHYRMRAEFRLWHDGDDLYHIMFDQQTKSRIRVDTFPAASQLINTLMKAMIAGVRDNHALRHKLFQMDYLTTLSNQAVVSLLYHKKLDEEWREAATALRDALRAQGLNVHLIGRATKTKIELDQDYIDERLPVAGKEMIYRQVENSFTQPNAAMNIQMLEWALEVTKDSKGDLLELYCGNGNFSLALARNFNRVLATEIAKPSVAAAQYNIAANHIDNVQIIRMAAEEFTQAMNGVREFNRLQGIDLKGYQCETIFVDPPRSGLDSETEKMVQAYPRILYISCNPETLCKNLETLSQTHTVSRLALFDQFPYTHHMECGVLLTAR.

S-adenosyl-L-methionine-binding residues include Q190, Y218, N223, E239, and D299. Catalysis depends on C324, which acts as the Nucleophile. E358 acts as the Proton acceptor in catalysis.

This sequence belongs to the class I-like SAM-binding methyltransferase superfamily. RNA M5U methyltransferase family. TrmA subfamily.

The enzyme catalyses uridine(54) in tRNA + S-adenosyl-L-methionine = 5-methyluridine(54) in tRNA + S-adenosyl-L-homocysteine + H(+). The catalysed reaction is uridine(341) in tmRNA + S-adenosyl-L-methionine = 5-methyluridine(341) in tmRNA + S-adenosyl-L-homocysteine + H(+). In terms of biological role, dual-specificity methyltransferase that catalyzes the formation of 5-methyluridine at position 54 (m5U54) in all tRNAs, and that of position 341 (m5U341) in tmRNA (transfer-mRNA). This is tRNA/tmRNA (uracil-C(5))-methyltransferase from Salmonella heidelberg (strain SL476).